The sequence spans 547 residues: Glucose-6-phosphate isomerase 2 (547 aa).

The Proton donor role is filled by Glu351. Residues His382 and Lys508 contribute to the active site.

This sequence belongs to the GPI family.

Its subcellular location is the cytoplasm. The enzyme catalyses alpha-D-glucose 6-phosphate = beta-D-fructose 6-phosphate. It functions in the pathway carbohydrate biosynthesis; gluconeogenesis. It participates in carbohydrate degradation; glycolysis; D-glyceraldehyde 3-phosphate and glycerone phosphate from D-glucose: step 2/4. Functionally, catalyzes the reversible isomerization of glucose-6-phosphate to fructose-6-phosphate. This chain is Glucose-6-phosphate isomerase 2, found in Neisseria meningitidis serogroup B (strain ATCC BAA-335 / MC58).